We begin with the raw amino-acid sequence, 615 residues long: Nuclear receptor subfamily 1 group D member 1 (615 aa).

A compositionally biased stretch (polar residues) spans 1–12 (MTTLDSNNNTGG). The segment at 1–70 (MTTLDSNNNT…TQDPARSFGS (70 aa)) is required for phosphorylation by CSNK1E and cytoplasmic localization. The tract at residues 1–120 (MTTLDSNNNT…SSRVSPSKGT (120 aa)) is disordered. A modulating region spans residues 1–129 (MTTLDSNNNT…TSNITKLNGM (129 aa)). Low complexity predominate over residues 14–34 (ITYIGSSGSSPSRTSPESLYS). A compositionally biased stretch (polar residues) spans 35–48 (DSSNGSFQSLTQGC). Residues 49–285 (PTYFPPSPTG…PPRSPSPEPT (237 aa)) form a crucial for activation of GJA1 region. A phosphoserine; by GSK3-beta mark is found at serine 55 and serine 59. Over residues 70-94 (SAPPSLSDDSSPSSASSSSSSSSSS) the composition is skewed to low complexity. The nuclear receptor DNA-binding region spans 130–206 (VLLCKVCGDV…VGMSRDAVRF (77 aa)). NR C4-type zinc fingers lie at residues 133 to 153 (CKVC…CEGC) and 170 to 194 (CLKN…FKKC). An N6-acetyllysine; by KAT5 mark is found at lysine 192 and lysine 193. Disordered regions lie at residues 235–286 (LCPL…EPTM) and 312–337 (PGNF…SQGC). Low complexity predominate over residues 240 to 252 (TSPTPHPTSGSMG). Over residues 253–262 (PSPPPAPAPT) the composition is skewed to pro residues. Threonine 275 is subject to Phosphothreonine; by CDK1. One can recognise an NR LBD domain in the interval 285–615 (TMEDVISQVA…KLLSFRVDAQ (331 aa)). The span at 312–328 (PGNFNANHASGSPSATT) shows a compositional bias: polar residues. Cysteine 419 is a binding site for heme. The residue at position 592 (lysine 592) is an N6-acetyllysine. Histidine 603 is a binding site for heme.

Belongs to the nuclear hormone receptor family. NR1 subfamily. Binds DNA as a monomer or a homodimer. Interacts with NR2E3 and ZNHIT1. Interacts with C1D. Interacts with SP1. Interacts with OPHN1 (via C-terminus). Interacts with PER2; the interaction associates PER2 to BMAL1 promoter region. Interacts with CRY1. Interacts with CCAR2. Interacts with SIAH2. Interacts with FBXW7 and CDK1. Interacts with HUWE1. Interacts with NR0B2. Interacts with NFIL3. Interacts (via domain NR LBD) with HSP90AA1 and HSP90AB1. Post-translationally, ubiquitinated, leading to its proteasomal degradation. Ubiquitinated by the SCF(FBXW7) complex when phosphorylated by CDK1 leading to its proteasomal degradation. Ubiquitinated by SIAH2; leading to its proteasomal degradation. Rapidly ubiquitinated in response to inflammatory triggers and sumoylation is a prerequisite to its ubiquitination. Sumoylated by UBE2I, desumoylated by SENP1, and sumoylation is a prerequisite to its ubiquitination. In terms of processing, phosphorylated by CSNK1E; phosphorylation enhances its cytoplasmic localization. Post-translationally, undergoes lysosome-mediated degradation in a time-dependent manner in the liver. Expressed during adipocyte differentiation (at protein level). Expressed in skeletal muscle, bladder, lumbar spinal cord, pancreatic islets and hypothalamus. Expressed in developing and adult retina. In the adult retina, predominantly expressed in the outer nuclear layer, where rod and cone cells reside, and also localized to the ganglion cell layer. Expressed in a circadian manner in the liver. Expressed in a circadian manner in the lung with a peak between ZT8 and ZT12.

The protein resides in the nucleus. Its subcellular location is the cytoplasm. It localises to the cell projection. The protein localises to the dendrite. It is found in the dendritic spine. Functionally, transcriptional repressor which coordinates circadian rhythm and metabolic pathways in a heme-dependent manner. Integral component of the complex transcription machinery that governs circadian rhythmicity and forms a critical negative limb of the circadian clock by directly repressing the expression of core clock components BMAL1, CLOCK and CRY1. Also regulates genes involved in metabolic functions, including lipid and bile acid metabolism, adipogenesis, gluconeogenesis and the macrophage inflammatory response. Acts as a receptor for heme which stimulates its interaction with the NCOR1/HDAC3 corepressor complex, enhancing transcriptional repression. Recognizes two classes of DNA response elements within the promoter of its target genes and can bind to DNA as either monomers or homodimers, depending on the nature of the response element. Binds as a monomer to a response element composed of the consensus half-site motif 5'-[A/G]GGTCA-3' preceded by an A/T-rich 5' sequence (RevRE), or as a homodimer to a direct repeat of the core motif spaced by two nucleotides (RevDR-2). Acts as a potent competitive repressor of ROR alpha (RORA) function and regulates the levels of its ligand heme by repressing the expression of PPARGC1A, a potent inducer of heme synthesis. Regulates lipid metabolism by repressing the expression of APOC3 and by influencing the activity of sterol response element binding proteins (SREBPs); represses INSIG2 which interferes with the proteolytic activation of SREBPs which in turn govern the rhythmic expression of enzymes with key functions in sterol and fatty acid synthesis. Regulates gluconeogenesis via repression of G6PC1 and PEPCK and adipocyte differentiation via repression of PPARG. Regulates glucagon release in pancreatic alpha-cells via the AMPK-NAMPT-SIRT1 pathway and the proliferation, glucose-induced insulin secretion and expression of key lipogenic genes in pancreatic-beta cells. Positively regulates bile acid synthesis by increasing hepatic expression of CYP7A1 via repression of NR0B2 and NFIL3 which are negative regulators of CYP7A1. Modulates skeletal muscle oxidative capacity by regulating mitochondrial biogenesis and autophagy; controls mitochondrial biogenesis and respiration by interfering with the STK11-PRKAA1/2-SIRT1-PPARGC1A signaling pathway. Represses the expression of SERPINE1/PAI1, an important modulator of cardiovascular disease and the expression of inflammatory cytokines and chemokines in macrophages. Represses gene expression at a distance in macrophages by inhibiting the transcription of enhancer-derived RNAs (eRNAs). Plays a role in the circadian regulation of body temperature and negatively regulates thermogenic transcriptional programs in brown adipose tissue (BAT); imposes a circadian oscillation in BAT activity, increasing body temperature when awake and depressing thermogenesis during sleep. In concert with NR2E3, regulates transcriptional networks critical for photoreceptor development and function. In addition to its activity as a repressor, can also act as a transcriptional activator. In the ovarian granulosa cells acts as a transcriptional activator of STAR which plays a role in steroid biosynthesis. In collaboration with SP1, activates GJA1 transcription in a heme-independent manner. Represses the transcription of CYP2B10, CYP4A10 and CYP4A14. Represses the transcription of CES2. Represses and regulates the circadian expression of TSHB in a NCOR1-dependent manner. Negatively regulates the protein stability of NR3C1 and influences the time-dependent subcellular distribution of NR3C1, thereby affecting its transcriptional regulatory activity. Plays a critical role in the circadian control of neutrophilic inflammation in the lung; under resting, non-stress conditions, acts as a rhythmic repressor to limit inflammatory activity whereas in the presence of inflammatory triggers undergoes ubiquitin-mediated degradation thereby relieving inhibition of the inflammatory response. Plays a key role in the circadian regulation of microglial activation and neuroinflammation; suppresses microglial activation through the NF-kappaB pathway in the central nervous system. Plays a role in the regulation of the diurnal rhythms of lipid and protein metabolism in the skeletal muscle via transcriptional repression of genes controlling lipid and amino acid metabolism in the muscle. The chain is Nuclear receptor subfamily 1 group D member 1 (Nr1d1) from Mus musculus (Mouse).